Consider the following 293-residue polypeptide: tRNA pseudouridine synthase B (293 aa).

Asp39 acts as the Nucleophile in catalysis.

This sequence belongs to the pseudouridine synthase TruB family. Type 1 subfamily.

It carries out the reaction uridine(55) in tRNA = pseudouridine(55) in tRNA. Functionally, responsible for synthesis of pseudouridine from uracil-55 in the psi GC loop of transfer RNAs. The chain is tRNA pseudouridine synthase B from Streptococcus mutans serotype c (strain ATCC 700610 / UA159).